We begin with the raw amino-acid sequence, 337 residues long: tRNA N6-adenosine threonylcarbamoyltransferase (337 aa).

Positions 111 and 115 each coordinate Fe cation. Substrate-binding positions include 134–138 (LVSGG), Asp-167, Gly-180, and Asn-272. Asp-300 is a Fe cation binding site.

This sequence belongs to the KAE1 / TsaD family. Requires Fe(2+) as cofactor.

It is found in the cytoplasm. The catalysed reaction is L-threonylcarbamoyladenylate + adenosine(37) in tRNA = N(6)-L-threonylcarbamoyladenosine(37) in tRNA + AMP + H(+). Functionally, required for the formation of a threonylcarbamoyl group on adenosine at position 37 (t(6)A37) in tRNAs that read codons beginning with adenine. Is involved in the transfer of the threonylcarbamoyl moiety of threonylcarbamoyl-AMP (TC-AMP) to the N6 group of A37, together with TsaE and TsaB. TsaD likely plays a direct catalytic role in this reaction. The protein is tRNA N6-adenosine threonylcarbamoyltransferase of Salmonella typhi.